The chain runs to 598 residues: Leucine aminopeptidase 2, chloroplastic (598 aa).

Residues 1–71 constitute a chloroplast transit peptide; that stretch reads MATAASTSAA…GHRARMGHTA (71 aa). 2 residues coordinate Mn(2+): lysine 367 and aspartate 372. Residue lysine 379 is part of the active site. Mn(2+) is bound by residues aspartate 392, aspartate 452, and glutamate 454. Arginine 456 is an active-site residue.

It belongs to the peptidase M17 family. As to quaternary structure, homohexamer (dimer of homotrimers). Mn(2+) is required as a cofactor.

It is found in the plastid. Its subcellular location is the chloroplast. The catalysed reaction is Release of an N-terminal amino acid, Xaa-|-Yaa-, in which Xaa is preferably Leu, but may be other amino acids including Pro although not Arg or Lys, and Yaa may be Pro. Amino acid amides and methyl esters are also readily hydrolyzed, but rates on arylamides are exceedingly low.. It carries out the reaction Release of N-terminal proline from a peptide.. Functionally, presumably involved in the processing and regular turnover of intracellular proteins. Catalyzes the removal of unsubstituted N-terminal amino acids from various peptides. The chain is Leucine aminopeptidase 2, chloroplastic from Oryza sativa subsp. japonica (Rice).